We begin with the raw amino-acid sequence, 528 residues long: Tyrosine--tRNA ligase, cytoplasmic (528 aa).

An L-tyrosine-binding site is contributed by tyrosine 39. The short motif at threonine 44 to tyrosine 52 is the 'HIGH' region element. Tyrosine 166, glutamine 170, aspartate 173, and glutamine 188 together coordinate L-tyrosine. The 'KMSKS' region motif lies at lysine 222–serine 226. The Nuclear localization signal motif lies at lysine 242–lysine 247. Residues lysine 335–aspartate 364 form a disordered region. Over residues lysine 346–serine 358 the composition is skewed to polar residues. The region spanning aspartate 364–tyrosine 468 is the tRNA-binding domain.

This sequence belongs to the class-I aminoacyl-tRNA synthetase family. Homodimer.

The protein resides in the cytoplasm. It localises to the nucleus. The enzyme catalyses tRNA(Tyr) + L-tyrosine + ATP = L-tyrosyl-tRNA(Tyr) + AMP + diphosphate + H(+). Its function is as follows. Catalyzes the attachment of tyrosine to tRNA(Tyr) in a two-step reaction: tyrosine is first activated by ATP to form Tyr-AMP and then transferred to the acceptor end of tRNA(Tyr). This is Tyrosine--tRNA ligase, cytoplasmic (yars1) from Xenopus tropicalis (Western clawed frog).